A 490-amino-acid chain; its full sequence is Betaine aldehyde dehydrogenase (490 aa).

3 residues coordinate K(+): Ser26, Ile27, and Asp93. 150-152 (GAW) lines the NAD(+) pocket. Lys162 (charge relay system) is an active-site residue. 176–179 (KPSE) contacts NAD(+). Val180 serves as a coordination point for K(+). 230–233 (GTVT) serves as a coordination point for NAD(+). Residue Leu246 coordinates K(+). Glu252 acts as the Proton acceptor in catalysis. 3 residues coordinate NAD(+): Gly254, Cys286, and Glu387. Cys286 functions as the Nucleophile in the catalytic mechanism. Cysteine sulfenic acid (-SOH) is present on Cys286. The K(+) site is built by Lys457 and Gly460. The active-site Charge relay system is the Glu464.

Belongs to the aldehyde dehydrogenase family. Dimer of dimers. K(+) serves as cofactor.

It carries out the reaction betaine aldehyde + NAD(+) + H2O = glycine betaine + NADH + 2 H(+). It participates in amine and polyamine biosynthesis; betaine biosynthesis via choline pathway; betaine from betaine aldehyde: step 1/1. Involved in the biosynthesis of the osmoprotectant glycine betaine. Catalyzes the irreversible oxidation of betaine aldehyde to the corresponding acid. The sequence is that of Betaine aldehyde dehydrogenase from Ectopseudomonas mendocina (strain ymp) (Pseudomonas mendocina).